Here is a 319-residue protein sequence, read N- to C-terminus: rRNA adenine N-6-methyltransferase (319 aa).

The segment at 1–59 is disordered; the sequence is MARAPRSPHPARSRETSRAHPPYGTRADRAPGRGRDRDRSPDSPGNTSSRDGGRSPDRA. Positions 26–41 are enriched in basic and acidic residues; that stretch reads RADRAPGRGRDRDRSP. Positions 66, 68, 93, 114, 141, and 157 each coordinate S-adenosyl-L-methionine.

It belongs to the class I-like SAM-binding methyltransferase superfamily. rRNA adenine N(6)-methyltransferase family.

It carries out the reaction adenosine(2085) in 23S rRNA + 2 S-adenosyl-L-methionine = N(6)-dimethyladenosine(2085) in 23S rRNA + 2 S-adenosyl-L-homocysteine + 2 H(+). Its function is as follows. This protein produces a dimethylation of the adenine residue at position 2085 in 23S rRNA, resulting in reduced affinity between ribosomes and macrolide-lincosamide-streptogramin B antibiotics. The sequence is that of rRNA adenine N-6-methyltransferase (ermSF) from Streptomyces fradiae (Streptomyces roseoflavus).